A 1032-amino-acid polypeptide reads, in one-letter code: Reticulon-3 (1032 aa).

Residues 1–24 are compositionally biased toward low complexity; it reads MAEPSAATQSHSISSSSFGAEPSA. Positions 1 to 61 are disordered; that stretch reads MAEPSAATQS…SSSSSQPVSL (61 aa). A2 is subject to N-acetylalanine. At 2–863 the chain is on the cytoplasmic side; sequence AEPSAATQSH…KKTGFVFGTT (862 aa). A Phosphoserine modification is found at S30. Residues 32 to 61 are compositionally biased toward low complexity; sequence GACPALGTKSCSSSCADSFVSSSSSQPVSL. Phosphoserine occurs at positions 229, 243, 246, 283, 316, and 453. Basic and acidic residues predominate over residues 545–568; it reads CEREEKTSKNFEELVSDSELHQDQ. The tract at residues 545-617 is disordered; the sequence is CEREEKTSKN…NPKLPSTVSP (73 aa). Residues 605–617 are compositionally biased toward polar residues; it reads TTENPKLPSTVSP. S649 and S650 each carry phosphoserine. The segment covering 696–715 has biased composition (basic and acidic residues); it reads NESGGSEIKDIGSKYSEQSK. The segment at 696–726 is disordered; the sequence is NESGGSEIKDIGSKYSEQSKETNGSEPLGVF. S735 is modified (phosphoserine). Positions 844 to 1032 constitute a Reticulon domain; sequence VHDLIFWRDV…LPGIAKKKAE (189 aa). An intramembrane region (helical) is located at residues 864–887; that stretch reads LIMLLSLAAFSVISVVSYLILALL. Residues 888–947 are Cytoplasmic-facing; it reads SVTISFRIYKSVIQAVQKSEEGHPFKAYLDVDITLSSEAFHNYMNAAMVHINRALKLIIR. Residues 948–968 constitute an intramembrane region (helical); that stretch reads LFLVEDLVDSLKLAVFMWLMT. Over 969-972 the chain is Cytoplasmic; that stretch reads YVGA. An intramembrane region (helical) is located at residues 973–993; that stretch reads VFNGITLLILAELLIFSVPIV. Residues 987–1032 form an interaction with FADD region; the sequence is IFSVPIVYEKYKTQIDHYVGIARDQTKSIVEKIQAKLPGIAKKKAE. Topologically, residues 994–1032 are cytoplasmic; it reads YEKYKTQIDHYVGIARDQTKSIVEKIQAKLPGIAKKKAE. Positions 1000-1002 are interaction with BACE1; the sequence is QID.

In terms of assembly, homodimer. Interacts with ATL1. Interacts with RTN4. Isoform 3 interacts with BACE1, BACE2, BCL2 and FADD. Interacts with ATL2. Interacts with TMEM33. Interacts with ZFYVE27 and with KIF5A in a ZFYVE27-dependent manner. Interacts with RIGI. Interacts with TRIM25. As to quaternary structure, (Microbial infection) Interacts with Coxsackievirus A16, enterovirus 71 and poliovirus P2C proteins. (Microbial infection) Interacts with West Nile virus protein NS4A. In terms of tissue distribution, isoform 3 is widely expressed, with highest levels in brain, where it is enriched in neuronal cell bodies from gray matter (at protein level). Three times more abundant in macula than in peripheral retina. Isoform 1 is expressed at high levels in brain and at low levels in skeletal muscle. Isoform 2 is only found in melanoma.

Its subcellular location is the endoplasmic reticulum membrane. It is found in the golgi apparatus membrane. Its function is as follows. May be involved in membrane trafficking in the early secretory pathway. Inhibits BACE1 activity and amyloid precursor protein processing. May induce caspase-8 cascade and apoptosis. May favor BCL2 translocation to the mitochondria upon endoplasmic reticulum stress. Induces the formation of endoplasmic reticulum tubules. Also acts as an inflammation-resolving regulator by interacting with both TRIM25 and RIGI, subsequently impairing RIGI 'Lys-63'-linked polyubiquitination leading to IRF3 and NF-kappa-B inhibition. In terms of biological role, (Microbial infection) Plays a positive role in viral replication and pathogenesis of enteroviruses. This chain is Reticulon-3 (RTN3), found in Homo sapiens (Human).